Consider the following 139-residue polypeptide: Transcription antitermination protein NusB (139 aa).

This sequence belongs to the NusB family.

In terms of biological role, involved in transcription antitermination. Required for transcription of ribosomal RNA (rRNA) genes. Binds specifically to the boxA antiterminator sequence of the ribosomal RNA (rrn) operons. The protein is Transcription antitermination protein NusB of Pectobacterium carotovorum subsp. carotovorum (strain PC1).